Consider the following 290-residue polypeptide: Beta carbonic anhydrase 6, mitochondrial (290 aa).

Residues 1–20 constitute a mitochondrion transit peptide; the sequence is MAFTLGGRARRLVSATSVHQ. The residue at position 122 (Ser-122) is a Phosphoserine. An S-nitrosocysteine modification is found at Cys-226.

The protein belongs to the beta-class carbonic anhydrase family. As to expression, strongly expressed in aerial tissues including leaves, stems, flowers and siliques, and, to a lower extent, in roots. Accumulates in guard cells.

It is found in the mitochondrion. The enzyme catalyses hydrogencarbonate + H(+) = CO2 + H2O. Reversible hydration of carbon dioxide. The protein is Beta carbonic anhydrase 6, mitochondrial (BCA6) of Arabidopsis thaliana (Mouse-ear cress).